A 449-amino-acid chain; its full sequence is Keratin, type I cuticular Ha7 (449 aa).

Residues 1–104 (MTSFYSTSSC…YGKNTLNGHE (104 aa)) form a head region. One can recognise an IF rod domain in the interval 104 to 415 (EKETMKFLND…NLLESEDCKL (312 aa)). Positions 105–139 (KETMKFLNDRLANYLEKVRQLEQENAELETTLLER) are coil 1A. Positions 140 to 150 (SKCHESTVCPD) are linker 1. A coil 1B region spans residues 151-251 (YQSYFRTIEE…HEQEVKILRS (101 aa)). The linker 12 stretch occupies residues 252–267 (QLGEKFRIELDIEPTI). Residues 268–411 (DLNRVLGEMR…ATYRNLLESE (144 aa)) are coil 2. Residues 416 to 449 (PCNPCSTPASCTSCPSCGPVTGGSPSGHGASMGR) form a tail region.

This sequence belongs to the intermediate filament family.

In Homo sapiens (Human), this protein is Keratin, type I cuticular Ha7 (KRT37).